The primary structure comprises 413 residues: Multifunctional CCA protein (413 aa).

Gly8 and Arg11 together coordinate ATP. Residues Gly8 and Arg11 each contribute to the CTP site. 2 residues coordinate Mg(2+): Asp21 and Asp23. Residues Arg91, Arg141, and Arg144 each contribute to the ATP site. CTP contacts are provided by Arg91, Arg141, and Arg144. In terms of domain architecture, HD spans Thr230–Leu331.

Belongs to the tRNA nucleotidyltransferase/poly(A) polymerase family. Bacterial CCA-adding enzyme type 1 subfamily. In terms of assembly, monomer. Can also form homodimers and oligomers. Mg(2+) is required as a cofactor. It depends on Ni(2+) as a cofactor.

It carries out the reaction a tRNA precursor + 2 CTP + ATP = a tRNA with a 3' CCA end + 3 diphosphate. It catalyses the reaction a tRNA with a 3' CCA end + 2 CTP + ATP = a tRNA with a 3' CCACCA end + 3 diphosphate. Functionally, catalyzes the addition and repair of the essential 3'-terminal CCA sequence in tRNAs without using a nucleic acid template. Adds these three nucleotides in the order of C, C, and A to the tRNA nucleotide-73, using CTP and ATP as substrates and producing inorganic pyrophosphate. tRNA 3'-terminal CCA addition is required both for tRNA processing and repair. Also involved in tRNA surveillance by mediating tandem CCA addition to generate a CCACCA at the 3' terminus of unstable tRNAs. While stable tRNAs receive only 3'-terminal CCA, unstable tRNAs are marked with CCACCA and rapidly degraded. The sequence is that of Multifunctional CCA protein from Verminephrobacter eiseniae (strain EF01-2).